The following is a 267-amino-acid chain: 5'-nucleotidase SurE (267 aa).

Residues aspartate 9, aspartate 10, serine 40, and asparagine 97 each contribute to the a divalent metal cation site.

It belongs to the SurE nucleotidase family. The cofactor is a divalent metal cation.

The protein localises to the cytoplasm. The enzyme catalyses a ribonucleoside 5'-phosphate + H2O = a ribonucleoside + phosphate. Nucleotidase that shows phosphatase activity on nucleoside 5'-monophosphates. This is 5'-nucleotidase SurE from Helicobacter pylori (strain Shi470).